Consider the following 333-residue polypeptide: Lipoyl synthase (333 aa).

A disordered region spans residues 1 to 29 (MTDSASGASAVANIATPSNEPYDATRKQK). Positions 80, 85, 91, 106, 110, 113, and 320 each coordinate [4Fe-4S] cluster. The 219-residue stretch at 91–309 (CFGKGTATFM…EEKAYEMGFT (219 aa)) folds into the Radical SAM core domain.

Belongs to the radical SAM superfamily. Lipoyl synthase family. The cofactor is [4Fe-4S] cluster.

It localises to the cytoplasm. The catalysed reaction is [[Fe-S] cluster scaffold protein carrying a second [4Fe-4S](2+) cluster] + N(6)-octanoyl-L-lysyl-[protein] + 2 oxidized [2Fe-2S]-[ferredoxin] + 2 S-adenosyl-L-methionine + 4 H(+) = [[Fe-S] cluster scaffold protein] + N(6)-[(R)-dihydrolipoyl]-L-lysyl-[protein] + 4 Fe(3+) + 2 hydrogen sulfide + 2 5'-deoxyadenosine + 2 L-methionine + 2 reduced [2Fe-2S]-[ferredoxin]. The protein operates within protein modification; protein lipoylation via endogenous pathway; protein N(6)-(lipoyl)lysine from octanoyl-[acyl-carrier-protein]: step 2/2. Functionally, catalyzes the radical-mediated insertion of two sulfur atoms into the C-6 and C-8 positions of the octanoyl moiety bound to the lipoyl domains of lipoate-dependent enzymes, thereby converting the octanoylated domains into lipoylated derivatives. This chain is Lipoyl synthase, found in Ralstonia nicotianae (strain ATCC BAA-1114 / GMI1000) (Ralstonia solanacearum).